Reading from the N-terminus, the 510-residue chain is Hexose carrier protein HEX6 (510 aa).

The Cytoplasmic portion of the chain corresponds to 1–22 (MAAGLAITSEGGQYNGRMTSFV). The next 12 membrane-spanning stretches (helical) occupy residues 23–43 (ALSC…IGVS), 83–103 (SFTS…SSVT), 118–128 (VFLAXAALGGA), 140–160 (VLLG…LSEM), 169–189 (INNG…LINY), 202–222 (ISLA…LFLP), 284–304 (LVMA…VIAF), 325–345 (IVTG…VDKL), 349–369 (ALFI…GSIM), 382–402 (GYAY…GWSW), 428–448 (AVSF…LCHF), and 451–471 (GIFF…HFLL). Residues 472 to 510 (PETKKVPIEKMDIVWRDHWFWKKIIGEEAAEENNKMEAA) lie on the Cytoplasmic side of the membrane.

This sequence belongs to the major facilitator superfamily. Sugar transporter (TC 2.A.1.1) family.

The protein resides in the membrane. Its function is as follows. Active uptake of hexoses. Probable glucose/hydrogen symport. This is Hexose carrier protein HEX6 (HEX6) from Ricinus communis (Castor bean).